We begin with the raw amino-acid sequence, 480 residues long: tRNA modification GTPase MnmE (480 aa).

Arg20, Glu114, and Lys154 together coordinate (6S)-5-formyl-5,6,7,8-tetrahydrofolate. A TrmE-type G domain is found at 250–406 (GLKLAIIGPP…ILKNIENIAE (157 aa)). Asn260 contacts K(+). Residues 260 to 265 (NVGKSS), 279 to 285 (SNIAGTT), and 304 to 307 (DTAG) contribute to the GTP site. Ser264 provides a ligand contact to Mg(2+). Ser279, Ile281, and Thr284 together coordinate K(+). Thr285 contributes to the Mg(2+) binding site. Lys480 is a binding site for (6S)-5-formyl-5,6,7,8-tetrahydrofolate.

Belongs to the TRAFAC class TrmE-Era-EngA-EngB-Septin-like GTPase superfamily. TrmE GTPase family. In terms of assembly, homodimer. Heterotetramer of two MnmE and two MnmG subunits. The cofactor is K(+).

Its subcellular location is the cytoplasm. In terms of biological role, exhibits a very high intrinsic GTPase hydrolysis rate. Involved in the addition of a carboxymethylaminomethyl (cmnm) group at the wobble position (U34) of certain tRNAs, forming tRNA-cmnm(5)s(2)U34. The protein is tRNA modification GTPase MnmE of Rickettsia felis (strain ATCC VR-1525 / URRWXCal2) (Rickettsia azadi).